The following is a 1507-amino-acid chain: DDB1- and CUL4-associated factor 1 (1507 aa).

The tract at residues 141–500 (QPLRTYSTGL…STLEILNLED (360 aa)) is protein kinase-like. A phosphoserine mark is found at S202 and S255. A disordered region spans residues 242–288 (HLDSGHKTSSRVNSTTKPEDGGLKKNKSAKQGDRENFRKAKQKLGFS). Positions 562 to 593 (SYTHEQIVEMMEFLIEYGPAQLYWEPAEVFLK) constitute a Chromo domain. The residue at position 701 (K701) is an N6-acetyllysine. S828 is subject to Phosphoserine. Positions 846-878 (PEKELLLLIRNHLISKGLGETATVLTKEADLPM) constitute a LisH domain. T888 carries the post-translational modification Phosphothreonine. A phosphoserine mark is found at S895 and S898. The segment at 917 to 947 (AAVGASAPSAPTAHPQPRPPQGPLALPGPSY) is disordered. Phosphoserine occurs at positions 979 and 1000. WD repeat units follow at residues 1091-1130 (EDESGFTCCAFSARERFLMLGTCTGQLKLYNVFSGQEEAS), 1133-1174 (CHNS…DMKH), 1176-1213 (FTEDHYVEFSKHSQDRVIGTKGDIAHIYDIQTGNKLLT), 1215-1247 (FNPDLANNYKRNCATFNPTDDLVLNDGVLWDVR), and 1248-1290 (SAQA…LLHT). Residues 1091 to 1290 (EDESGFTCCA…DLRTFHLLHT (200 aa)) form a WD repeat-like region region. Short sequence motifs (DWD box) lie at residues 1242–1249 (VLWDVRSA) and 1278–1285 (EIWDLRTF). At S1328 the chain carries Phosphoserine. The segment at 1393 to 1507 (RLAEDEDEEE…EDDIILSLNE (115 aa)) is disordered. Acidic residues-rich tracts occupy residues 1396–1483 (EDED…EEVE) and 1490–1501 (DSSDNSDLEDDI). Residues 1418–1507 (DDDTDDLDEL…EDDIILSLNE (90 aa)) are interaction with NF2.

Belongs to the VPRBP/DCAF1 family. As to quaternary structure, component of the DCX (DDB1-CUL4-X-box) E3 ubiquitin-protein ligase complex, named CUL4A-RBX1-DDB1-DCAF1/VPRBP complex. Interacts with DDB1; the interaction is direct. Also forms a ternary complex with DDA1 and DDB1. Interacts with NF2 (via FERM domain). Component of the EDVP complex, a E3 ligase complex containing DYRK2, EDD/UBR5, DDB1 and DCAF1. Interacts with DYRK2; the interaction is direct. Interacts with RAG1; the interaction is direct. Interacts with LLGL1 and LLGL2. Interacts with histone H3. Interacts with ESR1 and LATS1; probably recruited by LATS1 to promote ESR1 ubiquitination and ubiquitin-mediated proteasomal degradation. Directly interacts with TET1, TET2 and TET3 (via C-terminus). Interacts with CEP78; promoting DCAF1 localization to centrosomes. (Microbial infection) Interacts with HIV-1 virus Vpr protein; the interaction is direct. In terms of assembly, (Microbial infection) Interacts with HIV-2 virus Vpx protein; the interaction is direct and the complex recruits SAMHD1 to promote its ubiquitin-dependent proteasomal degradation. As to quaternary structure, (Microbial infection) Interacts (via C-terminus) with human cytomegalovirus protein UL35; this interaction induces the accumulation of cells in the G2 phase of the cell cycle. Ubiquitously expressed.

The protein resides in the cytoplasm. It localises to the nucleus. Its subcellular location is the cytoskeleton. It is found in the microtubule organizing center. The protein localises to the centrosome. The enzyme catalyses L-seryl-[protein] + ATP = O-phospho-L-seryl-[protein] + ADP + H(+). It catalyses the reaction L-threonyl-[protein] + ATP = O-phospho-L-threonyl-[protein] + ADP + H(+). The protein operates within protein modification; protein ubiquitination. Its function is as follows. Acts both as a substrate recognition component of E3 ubiquitin-protein ligase complexes and as an atypical serine/threonine-protein kinase, playing key roles in various processes such as cell cycle, telomerase regulation and histone modification. Probable substrate-specific adapter of a DCX (DDB1-CUL4-X-box) E3 ubiquitin-protein ligase complex, named CUL4A-RBX1-DDB1-DCAF1/VPRBP complex, which mediates ubiquitination and proteasome-dependent degradation of proteins such as NF2. Involved in the turnover of methylated proteins: recognizes and binds methylated proteins via its chromo domain, leading to ubiquitination of target proteins by the RBX1-DDB1-DCAF1/VPRBP complex. The CUL4A-RBX1-DDB1-DCAF1/VPRBP complex is also involved in B-cell development: DCAF1 is recruited by RAG1 to ubiquitinate proteins, leading to limit error-prone repair during V(D)J recombination. Also part of the EDVP complex, an E3 ligase complex that mediates ubiquitination of proteins such as TERT, leading to TERT degradation and telomerase inhibition. The EDVP complex also mediates ubiquitination and degradation of CCP110. Also acts as an atypical serine/threonine-protein kinase that specifically mediates phosphorylation of 'Thr-120' of histone H2A (H2AT120ph) in a nucleosomal context, thereby repressing transcription. H2AT120ph is present in the regulatory region of many tumor suppresor genes, down-regulates their transcription and is present at high level in a number of tumors. Involved in JNK-mediated apoptosis during cell competition process via its interaction with LLGL1 and LLGL2. By acting on TET dioxygenses, essential for oocyte maintenance at the primordial follicle stage, hence essential for female fertility. In terms of biological role, (Microbial infection) In case of infection by HIV-1 virus, it is recruited by HIV-1 Vpr in order to hijack the CUL4A-RBX1-DDB1-DCAF1/VPRBP function leading to arrest the cell cycle in G2 phase, and also to protect the viral protein from proteasomal degradation by another E3 ubiquitin ligase. The HIV-1 Vpr protein hijacks the CUL4A-RBX1-DDB1-DCAF1/VPRBP complex to promote ubiquitination and degradation of proteins such as TERT and ZIP/ZGPAT. (Microbial infection) In case of infection by HIV-2 virus, it is recruited by HIV-2 Vpx in order to hijack the CUL4A-RBX1-DDB1-DCAF1/VPRBP function leading to enhanced efficiency of macrophage infection and promotion of the replication of cognate primate lentiviruses in cells of monocyte/macrophage lineage. The chain is DDB1- and CUL4-associated factor 1 from Homo sapiens (Human).